The sequence spans 341 residues: Phenylalanine--tRNA ligase alpha subunit (341 aa).

Position 254 (glutamate 254) interacts with Mg(2+).

This sequence belongs to the class-II aminoacyl-tRNA synthetase family. Phe-tRNA synthetase alpha subunit type 1 subfamily. Tetramer of two alpha and two beta subunits. Mg(2+) serves as cofactor.

It localises to the cytoplasm. The catalysed reaction is tRNA(Phe) + L-phenylalanine + ATP = L-phenylalanyl-tRNA(Phe) + AMP + diphosphate + H(+). This is Phenylalanine--tRNA ligase alpha subunit from Chlorobium phaeobacteroides (strain DSM 266 / SMG 266 / 2430).